The following is a 234-amino-acid chain: NAD-reducing hydrogenase HoxS subunit gamma (234 aa).

The region spanning 2–77 (SIQITIDGKT…GLNVEVNDPE (76 aa)) is the 2Fe-2S ferredoxin-type domain. [2Fe-2S] cluster-binding residues include cysteine 35, cysteine 46, cysteine 49, and cysteine 61. The 4Fe-4S His(Cys)3-ligated-type domain maps to 77–116 (ELVDMRKALVEFLFAEGNHNCPSCEKSGRCQLQAVGYEVD). [4Fe-4S] cluster is bound by residues histidine 95, cysteine 97, cysteine 100, cysteine 106, cysteine 145, cysteine 148, cysteine 151, and cysteine 198.

This sequence belongs to the complex I 75 kDa subunit family. Tetramer of an alpha and a gamma subunits (flavin-containing dimer), and a delta and a nickel-containing beta subunits (hydrogenase dimer). [2Fe-2S] cluster is required as a cofactor. The cofactor is [4Fe-4S] cluster.

Its subcellular location is the cytoplasm. It catalyses the reaction H2 + NAD(+) = NADH + H(+). Functionally, subunits alpha and gamma of HoxS constitute an NADH--oxidoreductase. In Cupriavidus necator (strain ATCC 17699 / DSM 428 / KCTC 22496 / NCIMB 10442 / H16 / Stanier 337) (Ralstonia eutropha), this protein is NAD-reducing hydrogenase HoxS subunit gamma (hoxU).